A 135-amino-acid polypeptide reads, in one-letter code: Mediator of RNA polymerase II transcription subunit 10 (135 aa).

Belongs to the Mediator complex subunit 10 family. In terms of assembly, component of the Mediator complex, which is composed of MED1, MED4, MED6, MED7, MED8, MED9, MED10, MED11, MED12, MED13, MED13L, MED14, MED15, MED16, MED17, MED18, MED19, MED20, MED21, MED22, MED23, MED24, MED25, MED26, MED27, MED29, MED30, MED31, CCNC, CDK8 and CDC2L6/CDK11. The MED12, MED13, CCNC and CDK8 subunits form a distinct module termed the CDK8 module. Mediator containing the CDK8 module is less active than Mediator lacking this module in supporting transcriptional activation. Individual preparations of the Mediator complex lacking one or more distinct subunits have been variously termed ARC, CRSP, DRIP, PC2, SMCC and TRAP.

Its subcellular location is the nucleus. Functionally, component of the Mediator complex, a coactivator involved in the regulated transcription of nearly all RNA polymerase II-dependent genes. Mediator functions as a bridge to convey information from gene-specific regulatory proteins to the basal RNA polymerase II transcription machinery. Mediator is recruited to promoters by direct interactions with regulatory proteins and serves as a scaffold for the assembly of a functional preinitiation complex with RNA polymerase II and the general transcription factors. The sequence is that of Mediator of RNA polymerase II transcription subunit 10 (Med10) from Mus musculus (Mouse).